The following is a 50-amino-acid chain: MGKKSKATKKRLAKLDNQNSRVPAWVMLKTDREVQRNHKRRHWRRNDTDE.

This sequence belongs to the eukaryotic ribosomal protein eL39 family. In terms of assembly, part of the 50S ribosomal subunit. Interacts weakly with protein L23.

In terms of biological role, binds to the 23S rRNA. Forms part of the polypeptide exit tunnel. The protein is Large ribosomal subunit protein eL39 (rpl39e) of Haloarcula marismortui (strain ATCC 43049 / DSM 3752 / JCM 8966 / VKM B-1809) (Halobacterium marismortui).